The following is a 238-amino-acid chain: MTKKVSRRLRELQAKVEDREYGPLDALGLLKETATAKFGEAAEAHIRLGIDPKYTDQQLRTTVALPKGTGQIVRVAVIARGEKVTEASNAGADVVGSEELIDEIQKGRMDFDKLIATPDVMPQVAKLGKMLGPRGLMPSPKGGTVTFDVASAIAEFKAGKLEFRADRTGIVHVMFGKASFSPEDLLVNLKALQETIDRNRPSGAKGRYWRTFYVSATMGPSIRVDINALRDYKLTEAA.

Belongs to the universal ribosomal protein uL1 family. Part of the 50S ribosomal subunit.

Its function is as follows. Binds directly to 23S rRNA. The L1 stalk is quite mobile in the ribosome, and is involved in E site tRNA release. Protein L1 is also a translational repressor protein, it controls the translation of the L11 operon by binding to its mRNA. The sequence is that of Large ribosomal subunit protein uL1 from Nostoc sp. (strain PCC 7120 / SAG 25.82 / UTEX 2576).